The sequence spans 289 residues: ATP synthase gamma chain (289 aa).

It belongs to the ATPase gamma chain family. In terms of assembly, F-type ATPases have 2 components, CF(1) - the catalytic core - and CF(0) - the membrane proton channel. CF(1) has five subunits: alpha(3), beta(3), gamma(1), delta(1), epsilon(1). CF(0) has three main subunits: a, b and c.

The protein resides in the cell membrane. In terms of biological role, produces ATP from ADP in the presence of a proton gradient across the membrane. The gamma chain is believed to be important in regulating ATPase activity and the flow of protons through the CF(0) complex. The protein is ATP synthase gamma chain of Hamiltonella defensa subsp. Acyrthosiphon pisum (strain 5AT).